Here is a 397-residue protein sequence, read N- to C-terminus: Pectate lyase 2 (397 aa).

The signal sequence occupies residues 1-25; sequence MGIKQCCYILYFTLALVALLQPVRS. A glycan (N-linked (GlcNAc...) asparagine) is linked at Asn-37. Cys-54 and Cys-71 form a disulfide bridge. The Ca(2+) site is built by Asp-194, Asp-218, and Asp-222. Residue Arg-274 is part of the active site.

Belongs to the polysaccharide lyase 1 family. Amb a subfamily. In terms of assembly, monomer. The cofactor is Ca(2+). In terms of processing, the N-terminus is blocked. In terms of tissue distribution, pollen and flowers.

It catalyses the reaction Eliminative cleavage of (1-&gt;4)-alpha-D-galacturonan to give oligosaccharides with 4-deoxy-alpha-D-galact-4-enuronosyl groups at their non-reducing ends.. The protein operates within glycan metabolism; pectin degradation; 2-dehydro-3-deoxy-D-gluconate from pectin: step 2/5. Its function is as follows. Has pectate lyase activity. The protein is Pectate lyase 2 of Ambrosia artemisiifolia (Common ragweed).